A 654-amino-acid chain; its full sequence is Endoplasmic reticulum chaperone BiP (654 aa).

The first 18 residues, 1–18 (MKLSLVAAMLLLLSAARA), serve as a signal peptide directing secretion. Positions 1-80 (MKLSLVAAML…EGERLIGDAA (80 aa)) are required for interaction with ELAPOR1. 36–39 (GTTY) serves as a coordination point for ATP. Phosphoserine is present on S86. An ATP-binding site is contributed by K96. K125 bears the N6-acetyllysine mark. The tract at residues 125–280 (KPYIQVDIGG…KKKTGKDVRK (156 aa)) is nucleotide-binding (NBD). Y160 carries the 3'-nitrotyrosine modification. The residue at position 213 (K213) is an N6-acetyllysine. Position 227–229 (227–229 (GGT)) interacts with ATP. An N6-acetyllysine modification is found at K271. 293 to 300 (EKAKRALS) contributes to the ATP binding site. K326 is subject to N6-acetyllysine. Residue K352 forms a Glycyl lysine isopeptide (Lys-Gly) (interchain with G-Cter in SUMO2) linkage. K353 is subject to N6-acetyllysine; alternate. K353 is covalently cross-linked (Glycyl lysine isopeptide (Lys-Gly) (interchain with G-Cter in SUMO1); alternate). 364–367 (GSTR) lines the ATP pocket. Residues 409 to 419 (QDTGDLALLDV) are interdomain linker. A substrate-binding (SBD) region spans residues 420 to 500 (CPLTLGIETV…PRGVPQIEVT (81 aa)). Position 447 is an N6-succinyllysine (K447). R492 carries the post-translational modification Omega-N-methylarginine. T518 is modified (O-AMP-threonine; alternate). A Phosphothreonine; alternate modification is found at T518. K585 bears the N6,N6,N6-trimethyllysine; by METTL21A; in vitro mark. K585 bears the N6,N6-dimethyllysine; alternate mark. Position 585 is an N6-methyllysine; alternate (K585). N6-methyllysine is present on K591. Residues 633-654 (KLYGSAGPPPTGEEDTAEKDEL) are disordered. A phosphothreonine mark is found at T643 and T648. Positions 644–654 (GEEDTAEKDEL) are enriched in acidic residues. Positions 651–654 (KDEL) match the Prevents secretion from ER motif.

Belongs to the heat shock protein 70 family. As to quaternary structure, monomer and homooligomer; homooligomerization via the interdomain linker inactivates the chaperone activity and acts as a storage of HSPA5/BiP molecules. Interacts with DNAJC1 (via J domain). Component of an EIF2 complex at least composed of CELF1/CUGBP1, CALR, CALR3, EIF2S1, EIF2S2, HSP90B1 and HSPA5. Part of a large chaperone multiprotein complex comprising DNAJB11, HSP90B1, HSPA5, HYOU, PDIA2, PDIA4, PDIA6, PPIB, SDF2L1, UGGT1 and very small amounts of ERP29, but not, or at very low levels, CALR nor CANX. Interacts with TMEM132A and TRIM21. May form a complex with ERLEC1, OS9, SEL1L and SYVN1. Interacts with DNAJC10. Interacts with DNAJB9/ERdj4; leading to recruit HSPA5/BiP to ERN1/IRE1. Interacts with ERN1/IRE1 (via luminal domain); the interaction takes place following interaction with DNAJB9/ERdj4 and leads to inactivate ERN1/IRE1, the interaction also competitively inhibits ERN1 interaction with MANF. Interacts directly with MANF (via SAP domain); the interaction inhibits ATP binding to HSPA5/BiP and subsequent nucleotide exchange. Interacts with EIF2AK3/PERK (via luminal domain); interaction leads to inactivate EIF2AK3/PERK. Interacts with MX1. Interacts with METTL23. Interacts with CEMIP; the interaction induces calcium leakage from the endoplasmic reticulum and cell migration. Interacts with PCSK4 form; the interaction takes place in the endoplasmic reticulum. Interacts with CIPC. Interacts with CCDC88B (via C-terminus); the interaction opposes ERN1-mediated JNK activation, protecting against apoptosis. Interacts with INPP5K; necessary for INPP5K localization at the endoplasmic reticulum. Interacts with MANF; the interaction is direct. Interacts with LOXL2; leading to activate the ERN1/IRE1-XBP1 pathway of the unfolded protein response. Interacts with CLU under stressed condition; interaction increases CLU protein stability; facilitates its retrotranslocation and redistribution to the mitochondria; cooperatively suppress stress-induced apoptosis by stabilizing mitochondrial membrane integrity. Interacts with CCDC47. Interacts with CLN3. Interacts with ELAPOR1; may regulate the function of HSPA5 in apoptosis and cell proliferation. Interacts with CASP7. Interacts with ILDR2; the interaction stabilizes ILDR2 expression. Interacts with ADAM7. In unstressed cells, AMPylation at Thr-518 by FICD inactivates the chaperome activity: AMPylated form is locked in a relatively inert state and only weakly stimulated by J domain-containing proteins. In response to endoplasmic reticulum stress, de-AMPylation by the same protein, FICD, restores the chaperone activity.

Its subcellular location is the endoplasmic reticulum lumen. The protein localises to the melanosome. The protein resides in the cytoplasm. It localises to the cell surface. The catalysed reaction is ATP + H2O = ADP + phosphate + H(+). Its activity is regulated as follows. The chaperone activity is regulated by ATP-induced allosteric coupling of the nucleotide-binding (NBD) and substrate-binding (SBD) domains. In the ADP-bound and nucleotide-free (apo) states, the two domains have little interaction. In contrast, in the ATP-bound state the two domains are tightly coupled, which results in drastically accelerated kinetics in both binding and release of polypeptide substrates. J domain-containing co-chaperones (DNAJB9/ERdj4 or DNAJC10/ERdj5) stimulate the ATPase activity and are required for efficient substrate recognition by HSPA5/BiP. Homooligomerization inactivates participating HSPA5/BiP protomers and probably act as reservoirs to store HSPA5/BiP molecules when they are not needed by the cell. Functionally, endoplasmic reticulum chaperone that plays a key role in protein folding and quality control in the endoplasmic reticulum lumen. Involved in the correct folding of proteins and degradation of misfolded proteins via its interaction with DNAJC10/ERdj5, probably to facilitate the release of DNAJC10/ERdj5 from its substrate. Acts as a key repressor of the EIF2AK3/PERK and ERN1/IRE1-mediated unfolded protein response (UPR). In the unstressed endoplasmic reticulum, recruited by DNAJB9/ERdj4 to the luminal region of ERN1/IRE1, leading to disrupt the dimerization of ERN1/IRE1, thereby inactivating ERN1/IRE1. Also binds and inactivates EIF2AK3/PERK in unstressed cells. Accumulation of misfolded protein in the endoplasmic reticulum causes release of HSPA5/BiP from ERN1/IRE1 and EIF2AK3/PERK, allowing their homodimerization and subsequent activation. Plays an auxiliary role in post-translational transport of small presecretory proteins across endoplasmic reticulum (ER). May function as an allosteric modulator for SEC61 channel-forming translocon complex, likely cooperating with SEC62 to enable the productive insertion of these precursors into SEC61 channel. Appears to specifically regulate translocation of precursors having inhibitory residues in their mature region that weaken channel gating. May also play a role in apoptosis and cell proliferation. This is Endoplasmic reticulum chaperone BiP from Pongo abelii (Sumatran orangutan).